Reading from the N-terminus, the 725-residue chain is Polyribonucleotide nucleotidyltransferase (725 aa).

2 residues coordinate Mg(2+): aspartate 488 and aspartate 494. Positions 555-614 (PRMITMKIHPDKIREVIGKGGSTIQALTKETGTTIDIQEDGTITIASTSTDGMAEAKRRI) constitute a KH domain. Residues 624 to 692 (GKIYAGTVLK…EKGRLRLSLK (69 aa)) form the S1 motif domain. Positions 702 to 725 (ISPIAQGDAPAAAPAAPASPDQQQ) are disordered. Over residues 706–725 (AQGDAPAAAPAAPASPDQQQ) the composition is skewed to low complexity.

This sequence belongs to the polyribonucleotide nucleotidyltransferase family. The cofactor is Mg(2+).

It localises to the cytoplasm. The catalysed reaction is RNA(n+1) + phosphate = RNA(n) + a ribonucleoside 5'-diphosphate. Its function is as follows. Involved in mRNA degradation. Catalyzes the phosphorolysis of single-stranded polyribonucleotides processively in the 3'- to 5'-direction. The sequence is that of Polyribonucleotide nucleotidyltransferase from Cupriavidus metallidurans (strain ATCC 43123 / DSM 2839 / NBRC 102507 / CH34) (Ralstonia metallidurans).